Consider the following 1723-residue polypeptide: Homeobox protein 5 (1723 aa).

Low complexity predominate over residues 36–50; it reads QLQQPQHQPQHYQQQ. Disordered stretches follow at residues 36 to 425, 440 to 522, 543 to 756, 878 to 978, 1080 to 1214, 1226 to 1264, 1345 to 1399, 1456 to 1498, and 1513 to 1547; these read QLQQ…APGT, SSSP…QLQQ, ENIT…PPLT, GTIV…TGSL, IFNN…SENN, VSLG…NQQQ, IVNN…TQTS, QQQQ…STTT, and HNQQ…SRRK. A compositionally biased stretch (polar residues) spans 51-72; it reads DSFVSPNLDNNNPQIHVQSNNY. 2 stretches are compositionally biased toward low complexity: residues 73–107 and 114–212; these read NQNG…NNSS and NNSS…NNNN. 2 stretches are compositionally biased toward polar residues: residues 223–237 and 244–257; these read SQPT…QHNP and GQHN…MVMD. 2 stretches are compositionally biased toward low complexity: residues 258 to 284 and 291 to 350; these read NNNN…NSNS and NNNN…NNNN. The stretch at 300–351 forms a coiled coil; that stretch reads YNNNNNNNNNNNSNSNNNNNNNNNNNNNNNNNNNNNNNNNNNNNSNNNNNNQ. A compositionally biased stretch (polar residues) spans 351-369; sequence QFSQSYDSTLGNNRFSSMM. Low complexity-rich tracts occupy residues 371–421 and 440–465; these read QPIQ…LIGS and SSSP…LSSS. Polar residues predominate over residues 483-510; that stretch reads MSSITNTNLKSTQASTLKESKRSNSSPN. 3 stretches are compositionally biased toward low complexity: residues 511 to 522, 544 to 571, and 581 to 593; these read LKKQMQLQQLQQ, NITN…ITNN, and NSNN…DSIN. Over residues 632-655 the composition is skewed to polar residues; sequence HISTTQQSPSLNGSTGGSMLTPTM. The segment covering 660-669 has biased composition (gly residues); that stretch reads LSGGGSGGGF. Residues 673–685 are compositionally biased toward polar residues; sequence ISPTGTTSNKDLQ. Composition is skewed to low complexity over residues 686–699, 710–727, and 734–745; these read SSPS…SMSM, SMSS…SNGL, and SNNMNSSGGIPT. The segment covering 746–755 has biased composition (pro residues); it reads PSTPTSPPPL. Residues 882 to 928 are compositionally biased toward low complexity; the sequence is NPTNVNNNNINNNNNNNNNNNNNNNNNNNNNNNNNNNNTTTTTTTTT. Positions 929–945 are enriched in polar residues; sequence SANTVQSGTTSNSNLVF. Composition is skewed to low complexity over residues 946–977 and 1082–1146; these read QQTS…STGS and NNNN…SINS. Composition is skewed to polar residues over residues 1147–1159 and 1176–1187; these read PRPS…NSSG and DISTGLMASSDQ. Positions 1193-1270 form a coiled coil; the sequence is QQQQHQQLVN…NQQQILHQQL (78 aa). Residues 1194-1214 are compositionally biased toward low complexity; sequence QQQHQQLVNNNNNNMNNSENN. The segment covering 1226–1242 has biased composition (polar residues); it reads VSLGSLPTNTPSSMEIE. 5 stretches are compositionally biased toward low complexity: residues 1243–1264, 1347–1384, 1456–1480, 1487–1498, and 1518–1528; these read QQQQ…NQQQ, NNQN…TNTP, QQQQ…RSSP, SNTNTTTTSTTT, and SPISPRSPRSP. Residues 1431 to 1464 are a coiled coil; the sequence is VLQQQQQQQQQQQQQQQQQQQQQQQQQQQQQQET. A compositionally biased stretch (polar residues) spans 1529 to 1543; that stretch reads HGTSGDYNDGSQSPS. Residues 1543 to 1607 constitute a DNA-binding region (homeobox); sequence SSRRKNRFTD…NKRARSRPSP (65 aa). An EF-hand domain is found at 1553 to 1588; it reads FQIKRMNDCFENLDKNNNGKFTSEEICQIATELGLT. Disordered regions lie at residues 1598–1625 and 1661–1723; these read NKRA…GNNS and LHQQ…TINE. Residues 1612-1625 show a composition bias toward low complexity; it reads TNPLTSSTNNGNNS. The stretch at 1632-1702 forms a coiled coil; it reads LQQQHLQQVQ…NNNNNNNNNN (71 aa). Positions 1665–1675 are enriched in polar residues; the sequence is SANTTPQLNSM. Over residues 1676–1723 the composition is skewed to low complexity; sequence NPNSINYNNNNNNNNNNNNNNNNNNNNNNNNNNNNNNIINNNITTINE.

It localises to the nucleus. In terms of biological role, putative transcription factor. The protein is Homeobox protein 5 (hbx5-1) of Dictyostelium discoideum (Social amoeba).